Reading from the N-terminus, the 141-residue chain is MAIERTLSIIKPDAVAKNVIGQIYARFEAAGLKVVAAKMAHLSKGEAEAFYAVHKERPFFKDLVSFMISGPVMIQALEGEGAILKNRDLMGATDPKKAAAGTIRADFADSIDANAVHGSDAVETAQAEIAFFFPGMNIYSR.

6 residues coordinate ATP: K11, F59, R87, T93, R104, and N114. Residue H117 is the Pros-phosphohistidine intermediate of the active site.

Belongs to the NDK family. Homotetramer. Mg(2+) is required as a cofactor.

The protein resides in the cytoplasm. The catalysed reaction is a 2'-deoxyribonucleoside 5'-diphosphate + ATP = a 2'-deoxyribonucleoside 5'-triphosphate + ADP. It catalyses the reaction a ribonucleoside 5'-diphosphate + ATP = a ribonucleoside 5'-triphosphate + ADP. In terms of biological role, major role in the synthesis of nucleoside triphosphates other than ATP. The ATP gamma phosphate is transferred to the NDP beta phosphate via a ping-pong mechanism, using a phosphorylated active-site intermediate. This Polaromonas sp. (strain JS666 / ATCC BAA-500) protein is Nucleoside diphosphate kinase.